A 157-amino-acid chain; its full sequence is uncharacterized protein (157 aa).

The signal sequence occupies residues 1–19; the sequence is MRKYLIILVLLLFLSSSFG.

This is an uncharacterized protein from Methanocaldococcus jannaschii (strain ATCC 43067 / DSM 2661 / JAL-1 / JCM 10045 / NBRC 100440) (Methanococcus jannaschii).